Consider the following 760-residue polypeptide: Serine/threonine-protein kinase PknG (760 aa).

Residues 1–31 (MTSPENPDLPDADDAYVDSGPGTQPASLEDL) are disordered. Residues 161–403 (YEIKGCIAHG…SAEEMSSQLL (243 aa)) form the Protein kinase domain. ATP contacts are provided by residues 167–175 (IAHGGLGWV) and lysine 191. Catalysis depends on aspartate 286, which acts as the Proton acceptor.

It belongs to the protein kinase superfamily. Ser/Thr protein kinase family. As to quaternary structure, interacts with GarA in vitro.

It catalyses the reaction L-seryl-[protein] + ATP = O-phospho-L-seryl-[protein] + ADP + H(+). The enzyme catalyses L-threonyl-[protein] + ATP = O-phospho-L-threonyl-[protein] + ADP + H(+). In Mycolicibacterium smegmatis (strain ATCC 700084 / mc(2)155) (Mycobacterium smegmatis), this protein is Serine/threonine-protein kinase PknG (pknG).